A 243-amino-acid chain; its full sequence is Endochitinase (243 aa).

Intrachain disulfides connect C23-C85, C97-C105, and C223-C236. The active-site Proton donor is the E67.

It is found in the vacuole. The catalysed reaction is Random endo-hydrolysis of N-acetyl-beta-D-glucosaminide (1-&gt;4)-beta-linkages in chitin and chitodextrins.. Its function is as follows. Defense against chitin-containing fungal pathogens. Shows activity on chitin, tetra-N-acetylglucosamine and chitosan. This chain is Endochitinase, found in Carica papaya (Papaya).